Consider the following 525-residue polypeptide: Ribosomal protein S6 kinase beta-1 (525 aa).

Residues 28-32 carry the TOS motif motif; it reads FDIDL. Residues 28-54 form a disordered region; the sequence is FDIDLDQPEDAGSEDELEEGGQLNESM. Residues 30-46 are compositionally biased toward acidic residues; that stretch reads IDLDQPEDAGSEDELEE. The 262-residue stretch at 91–352 folds into the Protein kinase domain; it reads FELLRVLGKG…AGEVQAHPFF (262 aa). ATP contacts are provided by residues 97 to 105 and K123; that span reads LGKGGYGKV. D218 (proton acceptor) is an active-site residue. Residue T252 is modified to Phosphothreonine; by PDPK1. The AGC-kinase C-terminal domain occupies 353–423; sequence RHINWEELLA…VAPSVLESVK (71 aa). The disordered stretch occupies residues 380 to 399; sequence SQFDSKFTRQTPVDSPDDST. Positions 381–399 are enriched in polar residues; sequence QFDSKFTRQTPVDSPDDST. S394 bears the Phosphoserine mark. T412 carries the post-translational modification Phosphothreonine; by MTOR, NEK6 and NEK7. An autoinhibitory domain region spans residues 424–525; the sequence is EKFSFEPKIR…KRPEHLRMNL (102 aa). Residues S434 and S441 each carry the phosphoserine modification. Phosphothreonine is present on T444. Residues S447 and S452 each carry the phosphoserine modification. The segment at 486–509 is disordered; it reads VTTSGEASAPLPIRQPNSGPYKKQ. K516 is modified (N6-acetyllysine).

The protein belongs to the protein kinase superfamily. AGC Ser/Thr protein kinase family. S6 kinase subfamily. Interacts with PPP1R9A/neurabin-1. Interacts with RPTOR. Interacts with IRS1. Interacts with EIF3B and EIF3C. Interacts with POLDIP3. Interacts with TRAF4. Interacts (via N-terminus) with IER5. Dephosphorylation by PPP1CC at Thr-412 in mitochondrion. Phosphorylation at Thr-412 is regulated by mTORC1. The phosphorylation at this site is maintained by an agonist-dependent autophosphorylation mechanism. Activated by phosphorylation at Thr-252 by PDPK1. As to expression, brain.

The protein localises to the cytoplasm. The protein resides in the synapse. Its subcellular location is the synaptosome. It is found in the mitochondrion outer membrane. It localises to the mitochondrion. It carries out the reaction L-seryl-[protein] + ATP = O-phospho-L-seryl-[protein] + ADP + H(+). The catalysed reaction is L-threonyl-[protein] + ATP = O-phospho-L-threonyl-[protein] + ADP + H(+). With respect to regulation, activation requires multiple phosphorylation events on serine/threonine residues. Activation appears to be first mediated by phosphorylation of multiple sites in the autoinhibitory domain, which facilitates phosphorylation at Thr-412, disrupting the autoinhibitory mechanism and allowing phosphorylation of Thr-252 by PDPK1. The active conformation of the kinase is believed to be stabilized by a mechanism involving three conserved phosphorylation sites located in the kinase domain activation loop (Thr-252) and in the AGC-kinase C-terminal domain (Ser-394 in the middle of the tail/linker region and Thr-412 within a hydrophobic motif at its end). Activated by mTORC1; isoform Alpha I and isoform Alpha II are sensitive to rapamycin, which inhibits activating phosphorylation at Thr-412. Activated by PDPK1. Functionally, serine/threonine-protein kinase that acts downstream of mTOR signaling in response to growth factors and nutrients to promote cell proliferation, cell growth and cell cycle progression. Regulates protein synthesis through phosphorylation of EIF4B, RPS6 and EEF2K, and contributes to cell survival by repressing the pro-apoptotic function of BAD. Under conditions of nutrient depletion, the inactive form associates with the EIF3 translation initiation complex. Upon mitogenic stimulation, phosphorylation by the mechanistic target of rapamycin complex 1 (mTORC1) leads to dissociation from the EIF3 complex and activation. The active form then phosphorylates and activates several substrates in the pre-initiation complex, including the EIF2B complex and the cap-binding complex component EIF4B. Also controls translation initiation by phosphorylating a negative regulator of EIF4A, PDCD4, targeting it for ubiquitination and subsequent proteolysis. Promotes initiation of the pioneer round of protein synthesis by phosphorylating POLDIP3/SKAR. In response to IGF1, activates translation elongation by phosphorylating EEF2 kinase (EEF2K), which leads to its inhibition and thus activation of EEF2. Also plays a role in feedback regulation of mTORC2 by mTORC1 by phosphorylating MAPKAP1/SIN1, MTOR and RICTOR, resulting in the inhibition of mTORC2 and AKT1 signaling. Also involved in feedback regulation of mTORC1 and mTORC2 by phosphorylating DEPTOR. Mediates cell survival by phosphorylating the pro-apoptotic protein BAD and suppressing its pro-apoptotic function. Phosphorylates mitochondrial URI1 leading to dissociation of a URI1-PPP1CC complex. The free mitochondrial PPP1CC can then dephosphorylate RPS6KB1 at Thr-412, which is proposed to be a negative feedback mechanism for the RPS6KB1 anti-apoptotic function. Mediates TNF-alpha-induced insulin resistance by phosphorylating IRS1 at multiple serine residues, resulting in accelerated degradation of IRS1. In cells lacking functional TSC1-2 complex, constitutively phosphorylates and inhibits GSK3B. May be involved in cytoskeletal rearrangement through binding to neurabin. Phosphorylates and activates the pyrimidine biosynthesis enzyme CAD, downstream of MTOR. Following activation by mTORC1, phosphorylates EPRS and thereby plays a key role in fatty acid uptake by adipocytes and also most probably in interferon-gamma-induced translation inhibition. The sequence is that of Ribosomal protein S6 kinase beta-1 (Rps6kb1) from Rattus norvegicus (Rat).